Here is a 122-residue protein sequence, read N- to C-terminus: Ribonuclease P protein component (122 aa).

The protein belongs to the RnpA family. In terms of assembly, consists of a catalytic RNA component (M1 or rnpB) and a protein subunit.

It carries out the reaction Endonucleolytic cleavage of RNA, removing 5'-extranucleotides from tRNA precursor.. In terms of biological role, RNaseP catalyzes the removal of the 5'-leader sequence from pre-tRNA to produce the mature 5'-terminus. It can also cleave other RNA substrates such as 4.5S RNA. The protein component plays an auxiliary but essential role in vivo by binding to the 5'-leader sequence and broadening the substrate specificity of the ribozyme. This is Ribonuclease P protein component from Oenococcus oeni (strain ATCC BAA-331 / PSU-1).